Here is a 105-residue protein sequence, read N- to C-terminus: MLDKTTRINYLFDFYQELLTPKQRNYMEMYYLEDYSLGEISELFQVSRQAVYDNIKRTEAMLESYEEKLHLYSKFEQRVKLLEKLKLMTTDKHVHEHIQKLKDLD.

Belongs to the UPF0122 family.

Functionally, might take part in the signal recognition particle (SRP) pathway. This is inferred from the conservation of its genetic proximity to ftsY/ffh. May be a regulatory protein. This chain is UPF0122 protein OB1530, found in Oceanobacillus iheyensis (strain DSM 14371 / CIP 107618 / JCM 11309 / KCTC 3954 / HTE831).